The primary structure comprises 141 residues: Cystatin (141 aa).

The signal sequence occupies residues 1–26 (MVHSQLPVAAPLRLLCALLLLPSATM). The Cystatin domain occupies 29–129 (GGLSPRSVTD…CHFQVWSRPW (101 aa)). The short motif at 73 to 77 (QVVAG) is the Secondary area of contact element. 2 cysteine pairs are disulfide-bonded: Cys-91–Cys-107 and Cys-120–Cys-140.

This sequence belongs to the cystatin family. Expressed at a low level by the venom gland (at protein level).

It is found in the secreted. Functionally, inhibits various C1 cysteine proteases including cathepsin L, papain and cathepsin B. This protein has no toxic activity and its function in the venom is unknown. It may play a role as a housekeeping or regulatory protein. In Pseudonaja textilis (Eastern brown snake), this protein is Cystatin.